The chain runs to 833 residues: Urease (833 aa).

Positions 395–833 (GALDVHVHYI…LPLTRRYFVY (439 aa)) constitute a Urease domain. The Ni(2+) site is built by His400 and His402. Urea is bound by residues His402 and Ala433. Lys483 contributes to the Ni(2+) binding site. Lys483 is modified (N6-carboxylysine). His485 and His512 together coordinate urea. Ni(2+)-binding residues include His512 and His538. His586 functions as the Proton donor in the catalytic mechanism. Position 626 (Asp626) interacts with Ni(2+). Position 629 (Ala629) interacts with urea.

The protein in the C-terminal section; belongs to the metallo-dependent hydrolases superfamily. Urease alpha subunit family. As to quaternary structure, homohexamer. Requires Ni(2+) as cofactor. Carboxylation allows a single lysine to coordinate two nickel ions.

It catalyses the reaction urea + 2 H2O + H(+) = hydrogencarbonate + 2 NH4(+). The protein operates within nitrogen metabolism; urea degradation; CO(2) and NH(3) from urea (urease route): step 1/1. The urease accessory proteins URE4, URE6 and URE7 are required for urease activity, URE7 supplying nickel for the functional urease. In terms of biological role, plays a nutritional role via nitrogen acquisition in the environment. Contributes to the central nervous system invasion by enhancing yeast sequestration within microcapillary beds (such as within the brain) during hematogenous spread, thereby facilitating blood-to-brain invasion by C.neoformans. Affects fitness within the mammalian phagosome, promoting non-lytic exocytosis while delaying intracellular replication and thus reducing phagolysosomal membrane damage, events that could facilitate cryptococcal dissemination when transported inside macrophages. Urease activity is also associated with the regulation of key intracellular metabolic pathways, including melanin biosynthesis, polyamine biosynthesis, as well as intracellular levels of proline and reactive oxygen species. This chain is Urease, found in Cryptococcus neoformans var. grubii serotype A (strain H99 / ATCC 208821 / CBS 10515 / FGSC 9487) (Filobasidiella neoformans var. grubii).